The chain runs to 244 residues: 3-deoxy-manno-octulosonate cytidylyltransferase (244 aa).

Belongs to the KdsB family.

The protein resides in the cytoplasm. The enzyme catalyses 3-deoxy-alpha-D-manno-oct-2-ulosonate + CTP = CMP-3-deoxy-beta-D-manno-octulosonate + diphosphate. The protein operates within nucleotide-sugar biosynthesis; CMP-3-deoxy-D-manno-octulosonate biosynthesis; CMP-3-deoxy-D-manno-octulosonate from 3-deoxy-D-manno-octulosonate and CTP: step 1/1. Its pathway is bacterial outer membrane biogenesis; lipopolysaccharide biosynthesis. Its function is as follows. Activates KDO (a required 8-carbon sugar) for incorporation into bacterial lipopolysaccharide in Gram-negative bacteria. This chain is 3-deoxy-manno-octulosonate cytidylyltransferase, found in Flavobacterium johnsoniae (strain ATCC 17061 / DSM 2064 / JCM 8514 / BCRC 14874 / CCUG 350202 / NBRC 14942 / NCIMB 11054 / UW101) (Cytophaga johnsonae).